Here is a 507-residue protein sequence, read N- to C-terminus: UDP-glycosyltransferase 73D1 (507 aa).

UDP-alpha-D-glucose-binding positions include S298, S359–Q361, H376–E384, and F398–Q401.

This sequence belongs to the UDP-glycosyltransferase family.

The polypeptide is UDP-glycosyltransferase 73D1 (UGT73D1) (Arabidopsis thaliana (Mouse-ear cress)).